The chain runs to 562 residues: Arginine--tRNA ligase (562 aa).

The 'HIGH' region motif lies at 130 to 140 (ANPTGPLHIGH).

This sequence belongs to the class-I aminoacyl-tRNA synthetase family. Monomer.

The protein localises to the cytoplasm. The catalysed reaction is tRNA(Arg) + L-arginine + ATP = L-arginyl-tRNA(Arg) + AMP + diphosphate. This chain is Arginine--tRNA ligase, found in Geobacter metallireducens (strain ATCC 53774 / DSM 7210 / GS-15).